Consider the following 1038-residue polypeptide: P3N-PIPO polyprotein (1038 aa).

Positions 170–313 (LVAKSDFDDL…AGDVGRTMHY (144 aa)) constitute a Peptidase S30 domain. Residues H224, E233, and S266 each act as for P1 proteinase activity in the active site. The Involved in interaction with stylet and aphid transmission motif lies at 365–368 (KMAC). Positions 622–624 (PTK) match the Involved in virions binding and aphid transmission motif. In terms of domain architecture, Peptidase C6 spans 648 to 770 (MYIAKEGYCY…EGEMKWYRVG (123 aa)). Active-site for helper component proteinase activity residues include C656 and H729.

Belongs to the potyviridae P3N-PIPO polyprotein family. In terms of assembly, interacts (via PIPO domain) with host PCaP1 protein; this interaction may help to anchor the movement complex to the plasma membrane from which the complex could move to the plasmodesmata. In terms of processing, potyviral RNA is expressed as two polyproteins which undergo post-translational proteolytic processing. Genome polyprotein is processed by NIa-pro, P1 and HC-pro proteinases resulting in the production of at least ten individual proteins. P3N-PIPO is cleaved by P1 and HC-pro proteinases resulting in the production of three individual proteins. The P1 proteinase and the HC-pro cleave only their respective C-termini autocatalytically.

It localises to the host cell junction. The protein resides in the host plasmodesma. The catalysed reaction is Hydrolyzes a Gly-|-Gly bond at its own C-terminus, commonly in the sequence -Tyr-Xaa-Val-Gly-|-Gly, in the processing of the potyviral polyprotein.. In terms of biological role, required for aphid transmission and also has proteolytic activity. Only cleaves a Gly-Gly dipeptide at its own C-terminus. Interacts with virions and aphid stylets. Acts as a suppressor of RNA-mediated gene silencing, also known as post-transcriptional gene silencing (PTGS), a mechanism of plant viral defense that limits the accumulation of viral RNAs. May have RNA-binding activity. Allows efficient cell to cell propagation, by bypassing the host cell wall barrier. Transports viral genome to neighboring plant cells directly through plasmosdesmata, without any budding. This is P3N-PIPO polyprotein from Beet mosaic virus (BtMV).